A 275-amino-acid chain; its full sequence is Putative pyruvate, phosphate dikinase regulatory protein (275 aa).

151 to 158 (GVSRTSKT) is a binding site for ADP.

Belongs to the pyruvate, phosphate/water dikinase regulatory protein family. PDRP subfamily.

It catalyses the reaction N(tele)-phospho-L-histidyl/L-threonyl-[pyruvate, phosphate dikinase] + ADP = N(tele)-phospho-L-histidyl/O-phospho-L-threonyl-[pyruvate, phosphate dikinase] + AMP + H(+). The catalysed reaction is N(tele)-phospho-L-histidyl/O-phospho-L-threonyl-[pyruvate, phosphate dikinase] + phosphate + H(+) = N(tele)-phospho-L-histidyl/L-threonyl-[pyruvate, phosphate dikinase] + diphosphate. Bifunctional serine/threonine kinase and phosphorylase involved in the regulation of the pyruvate, phosphate dikinase (PPDK) by catalyzing its phosphorylation/dephosphorylation. The polypeptide is Putative pyruvate, phosphate dikinase regulatory protein (Rhodospirillum rubrum (strain ATCC 11170 / ATH 1.1.1 / DSM 467 / LMG 4362 / NCIMB 8255 / S1)).